Here is a 122-residue protein sequence, read N- to C-terminus: Small ribosomal subunit protein bS6 (122 aa).

The protein belongs to the bacterial ribosomal protein bS6 family.

Its function is as follows. Binds together with bS18 to 16S ribosomal RNA. The chain is Small ribosomal subunit protein bS6 from Trichlorobacter lovleyi (strain ATCC BAA-1151 / DSM 17278 / SZ) (Geobacter lovleyi).